We begin with the raw amino-acid sequence, 246 residues long: Probable transcriptional regulatory protein YebC (246 aa).

Residues 1–20 form a disordered region; the sequence is MAGHSKWANTRHRKAAQDAK.

Belongs to the TACO1 family.

The protein localises to the cytoplasm. The protein is Probable transcriptional regulatory protein YebC of Shigella dysenteriae serotype 1 (strain Sd197).